The chain runs to 205 residues: MSKRIEAKYKINRRLGANLWGRSKSPLNRGKENPPGQHGQRRKKPSDFGTQLMAKQKLKGYYGNISEKQFRRLYDEAVRRRGDTSENLIGLLECRLDAVVYRLKFAPTPFAARQLVNHCHILVNGKRVNIPSYRVNEGDVISVKTKSKDMALILEAAQSGERDVPDYMEVDHKEMKGKFVRIPKLGDVPYAVQMEPNLVVEFYSR.

Positions 20 to 47 are disordered; that stretch reads WGRSKSPLNRGKENPPGQHGQRRKKPSD. The S4 RNA-binding domain occupies 94-154; sequence CRLDAVVYRL…TKSKDMALIL (61 aa).

This sequence belongs to the universal ribosomal protein uS4 family. As to quaternary structure, part of the 30S ribosomal subunit. Contacts protein S5. The interaction surface between S4 and S5 is involved in control of translational fidelity.

Functionally, one of the primary rRNA binding proteins, it binds directly to 16S rRNA where it nucleates assembly of the body of the 30S subunit. With S5 and S12 plays an important role in translational accuracy. This Paramagnetospirillum magneticum (strain ATCC 700264 / AMB-1) (Magnetospirillum magneticum) protein is Small ribosomal subunit protein uS4.